We begin with the raw amino-acid sequence, 347 residues long: Haptoglobin (347 aa).

The signal sequence occupies residues 1-18; it reads MRALGAVVTLLLWGQLFA. The Sushi domain occupies 31–88; that stretch reads DSCPKPPEIANGYVEHLVRYRCRQFYRLRAEGDGVYTLNDEKQWMNTVAGEKLPECEA. 4 cysteine pairs are disulfide-bonded: Cys-52–Cys-86, Cys-90–Cys-207, Cys-250–Cys-281, and Cys-292–Cys-322. The Peptidase S1 domain occupies 103–345; that stretch reads IIGGSMDAKG…LKDWVQETMA (243 aa). N-linked (GlcNAc...) asparagine glycosylation is found at Asn-148, Asn-182, and Asn-264. Residues 259–264 form an interaction with CD163 region; that stretch reads VPEKKN.

It belongs to the peptidase S1 family. In terms of assembly, tetramer of two alpha and two beta chains; disulfide-linked. The hemoglobin/haptoglobin complex is composed of a haptoglobin dimer bound to two hemoglobin alpha-beta dimers. Interacts with CD163. Interacts with ERGIC3. As to expression, expressed by the liver and secreted in plasma.

It is found in the secreted. In terms of biological role, as a result of hemolysis, hemoglobin is found to accumulate in the kidney and is secreted in the urine. Haptoglobin captures, and combines with free plasma hemoglobin to allow hepatic recycling of heme iron and to prevent kidney damage. Haptoglobin also acts as an antioxidant, has antibacterial activity and plays a role in modulating many aspects of the acute phase response. Hemoglobin/haptoglobin complexes are rapidly cleared by the macrophage CD163 scavenger receptor expressed on the surface of liver Kupfer cells through an endocytic lysosomal degradation pathway. This chain is Haptoglobin (Hp), found in Mus caroli (Ryukyu mouse).